We begin with the raw amino-acid sequence, 158 residues long: Urease accessory protein UreE (158 aa).

This sequence belongs to the UreE family.

The protein resides in the cytoplasm. In terms of biological role, involved in urease metallocenter assembly. Binds nickel. Probably functions as a nickel donor during metallocenter assembly. This is Urease accessory protein UreE from Klebsiella pneumoniae subsp. pneumoniae (strain ATCC 700721 / MGH 78578).